The sequence spans 604 residues: Sulfite reductase [NADPH] flavoprotein alpha-component (604 aa).

The Flavodoxin-like domain occupies 65–203 (VTILYGSQTG…AAGQWHADVL (139 aa)). Residues 71–76 (SQTGNG), 118–121 (STHG), and 154–163 (LGDSSYEFFC) each bind FMN. The FAD-binding FR-type domain maps to 236–453 (QNPYSAEVLV…VEPNKHFRLP (218 aa)). Residues threonine 324, leucine 358, 392-395 (RLYS), 410-412 (TVA), and 425-428 (GGAS) contribute to the FAD site. Residues 524-525 (SR), 530-534 (KIYVQ), and aspartate 566 contribute to the NADP(+) site. Tyrosine 604 contacts FAD.

It belongs to the NADPH-dependent sulphite reductase flavoprotein subunit CysJ family. In the N-terminal section; belongs to the flavodoxin family. This sequence in the C-terminal section; belongs to the flavoprotein pyridine nucleotide cytochrome reductase family. In terms of assembly, alpha(8)-beta(8). The alpha component is a flavoprotein, the beta component is a hemoprotein. FAD is required as a cofactor. The cofactor is FMN.

The catalysed reaction is hydrogen sulfide + 3 NADP(+) + 3 H2O = sulfite + 3 NADPH + 4 H(+). Its pathway is sulfur metabolism; hydrogen sulfide biosynthesis; hydrogen sulfide from sulfite (NADPH route): step 1/1. Component of the sulfite reductase complex that catalyzes the 6-electron reduction of sulfite to sulfide. This is one of several activities required for the biosynthesis of L-cysteine from sulfate. The flavoprotein component catalyzes the electron flow from NADPH -&gt; FAD -&gt; FMN to the hemoprotein component. In Shewanella sp. (strain MR-4), this protein is Sulfite reductase [NADPH] flavoprotein alpha-component.